Reading from the N-terminus, the 429-residue chain is MRKFDKSIAAFEEAQDLMPGGVNSPVRAFKSVGMNPLFMERGKGSKVYDIDGNEYIDYVLSWGPLIHGHANDRVVEALKAVAERGTSFGAPTEIENKLAKLVIERVPSIEIVRMVNSGTEATMSALRLARGYTGRNKILKFIGCYHGHGDSLLIKAGSGVATLGLPDSPGVPEGVAKNTITVAYNDLESVKYAFEQFGDDIACVIVEPVAGNMGVVPPQPGFLEGLREVTEQNGALLIFDEVMTGFRVAYNCGQGYYGVTPDLTCLGKVIGGGLPVGAYGGKAEIMRQVAPSGPIYQAGTLSGNPLAMAAGYETLVQLTPESYVEFERKAEMLEAGLRKAAEKHGIPHHINRAGSMIGIFFTDEPVINYDAAKSSNLQFFAAYYREMVEQGVFLPPSQFEGLFLSTVHSDADIEATIAAAEIAMSKLKA.

The residue at position 268 (K268) is an N6-(pyridoxal phosphate)lysine.

This sequence belongs to the class-III pyridoxal-phosphate-dependent aminotransferase family. HemL subfamily. As to quaternary structure, homodimer. Pyridoxal 5'-phosphate serves as cofactor.

Its subcellular location is the cytoplasm. The catalysed reaction is (S)-4-amino-5-oxopentanoate = 5-aminolevulinate. Its pathway is porphyrin-containing compound metabolism; protoporphyrin-IX biosynthesis; 5-aminolevulinate from L-glutamyl-tRNA(Glu): step 2/2. In Bacillus anthracis (strain A0248), this protein is Glutamate-1-semialdehyde 2,1-aminomutase 2.